The chain runs to 169 residues: X polypeptide (169 aa).

This sequence belongs to the IagB/IpgF/P19 family.

This chain is X polypeptide (X), found in Escherichia coli.